A 205-amino-acid chain; its full sequence is Guanylyl cyclase-activating protein 1 (205 aa).

A lipid anchor (N-myristoyl glycine) is attached at Gly2. At Asn3 the chain carries Deamidated asparagine. EF-hand domains are found at residues 14 to 49, 51 to 86, 87 to 122, and 131 to 166; these read SSTE…KNLS, WASQ…VLKG, KVEQ…IRAI, and TAEE…DQML. Ca(2+)-binding residues include Asp64, Asn66, Asp68, Tyr70, Glu75, Asp100, Asp102, Asn104, Cys106, Glu111, Asp144, Asn146, Asp148, Glu150, and Glu155. Positions 185-205 are disordered; sequence NGEQDEEGASGRETEAAEADG.

Homodimer. As to expression, detected in the retina. Detected in rod and cone photoreceptor cells (at protein level). Also present in certain pinealocytes.

It localises to the membrane. It is found in the photoreceptor inner segment. Its subcellular location is the cell projection. The protein localises to the cilium. The protein resides in the photoreceptor outer segment. Functionally, stimulates retinal guanylyl cyclase when free calcium ions concentration is low and inhibits guanylyl cyclase when free calcium ions concentration is elevated. This Ca(2+)-sensitive regulation of retinal guanylyl cyclase is a key event in recovery of the dark state of rod photoreceptors following light exposure. May be involved in cone photoreceptor light response and recovery of response in bright light. The protein is Guanylyl cyclase-activating protein 1 (GUCA1A) of Bos taurus (Bovine).